The sequence spans 1857 residues: Phosphatidylinositol 3-kinase 2 (1857 aa).

Composition is skewed to low complexity over residues 1 to 32 and 42 to 55; these read MKMS…SNGS and NLSV…SNNS. Disordered regions lie at residues 1 to 61, 145 to 313, 348 to 468, 481 to 512, and 530 to 573; these read MKMS…KSST, TPLN…TNRV, SSSK…NSIR, ISSN…GERV, and ESDI…GPNV. Positions 145–155 are enriched in polar residues; the sequence is TPLNRSRSGSI. A compositionally biased stretch (low complexity) spans 162 to 269; sequence NNLTSSSSSS…NNNNNNNSNS (108 aa). Residues 270–281 are compositionally biased toward polar residues; it reads GGSSRMITSKSQ. Composition is skewed to low complexity over residues 288-311 and 352-464; these read TSNT…TPTN and LLIP…QPSN. The span at 533 to 560 shows a compositional bias: low complexity; it reads ISSSPRSIGSPNSIRASISSQLPPSLSS. Residues 561 to 570 are compositionally biased toward gly residues; sequence IGGGGGGGSG. A PI3K-RBD domain is found at 821–934; the sequence is PNKITIMVLL…NQTVELSLTN (114 aa). The tract at residues 996-1078 is disordered; sequence KETNKENKDS…SGSGNGSEQP (83 aa). A compositionally biased stretch (basic and acidic residues) spans 997-1011; that stretch reads ETNKENKDSNKENKD. The segment covering 1012–1056 has biased composition (low complexity); it reads SSSNNNNNNNNNNNNNNNNNNNNNNNNNNNGNNNGNNSNNNSNSN. The region spanning 1099 to 1271 is the C2 PI3K-type domain; it reads VKRLFRVNIA…QPIILLVEFE (173 aa). Positions 1326 to 1503 constitute a PIK helical domain; it reads PVGLKKLDLD…GLLLEGYLRS (178 aa). The PI3K/PI4K catalytic domain maps to 1568-1845; sequence IIDKCRYMDS…NISVALNTKT (278 aa). Residues 1574-1580 form a G-loop region; that stretch reads YMDSKKL. Residues 1711 to 1719 form a catalytic loop region; the sequence is GIGDRHSDN. An activation loop region spans residues 1730–1756; that stretch reads HIDFGHFLGNYKKKYGFKRERAPFIFT.

It belongs to the PI3/PI4-kinase family.

It carries out the reaction a 1,2-diacyl-sn-glycero-3-phospho-(1D-myo-inositol) + ATP = a 1,2-diacyl-sn-glycero-3-phospho-(1D-myo-inositol-3-phosphate) + ADP + H(+). This chain is Phosphatidylinositol 3-kinase 2 (pikB), found in Dictyostelium discoideum (Social amoeba).